The chain runs to 188 residues: Peptidyl-tRNA hydrolase (188 aa).

Phe-15 contributes to the tRNA binding site. The active-site Proton acceptor is the His-20. TRNA-binding residues include Tyr-64, Asn-66, and Asn-112.

This sequence belongs to the PTH family. Monomer.

Its subcellular location is the cytoplasm. The catalysed reaction is an N-acyl-L-alpha-aminoacyl-tRNA + H2O = an N-acyl-L-amino acid + a tRNA + H(+). Its function is as follows. Hydrolyzes ribosome-free peptidyl-tRNAs (with 1 or more amino acids incorporated), which drop off the ribosome during protein synthesis, or as a result of ribosome stalling. In terms of biological role, catalyzes the release of premature peptidyl moieties from peptidyl-tRNA molecules trapped in stalled 50S ribosomal subunits, and thus maintains levels of free tRNAs and 50S ribosomes. This is Peptidyl-tRNA hydrolase from Borrelia turicatae (strain 91E135).